The sequence spans 192 residues: uncharacterized protein (192 aa).

Residues 71 to 100 (NNVLPEPSKPNNPVVNPPVSPIQPKTDPEQ) are disordered. A compositionally biased stretch (pro residues) spans 77–91 (PSKPNNPVVNPPVSP).

This is an uncharacterized protein from Caenorhabditis elegans.